Consider the following 512-residue polypeptide: MTDSHTAGPFIAAIDQGTTSSRCIVFDRDGRIVSVDQKEHEQIFPKPGWVEHDATEIWTNVQEVVAGAVEKAGITRDDIKAIGITNQRETTLVWDKNTGEPVHNAIVWQDTRTDALCKELGRNVGQDRFRRETGLPLASYFAGPKARWLLDNVDGLRERAEAGDLLFGTMDTWVIWNLTGGVNGGKHVTDVTNASRTMLMNLHTMAWDEKIAESIGVPMQMLPEIRSSAEVYGEITGGRLGELLGGIPVASALGDQQAALFGQTCFSEGETKSTYGTGTFMVMNTGDKLINSYSGLLTTVGYKIGDQDTVYALEGSIAVTGSLVQWMRDQMGLISTAAEIETLALTVEDNGGAYFVPAFSGLFAPYWRSDARGVIAGLTRYVTKAHLARAVLEATAWQTREIADAMTKDSGVELTALKVDGGMTSNNLLMQTLADFVDAPVVRPMVAETTCLGAAYAAGLAVGFWNSTDDLRANWRRAAEWTPRMDADIRDREYKSWLKAVERTMGWLEDEE.

Thr18 contributes to the ADP binding site. The ATP site is built by Thr18, Thr19, and Ser20. Residue Thr18 participates in sn-glycerol 3-phosphate binding. Arg22 provides a ligand contact to ADP. Sn-glycerol 3-phosphate-binding residues include Arg88, Glu89, Tyr140, and Asp255. Residues Arg88, Glu89, Tyr140, Asp255, and Gln256 each contribute to the glycerol site. 2 residues coordinate ADP: Thr277 and Gly321. Thr277, Gly321, Gln325, and Gly422 together coordinate ATP. Residues Gly422 and Asn426 each contribute to the ADP site.

The protein belongs to the FGGY kinase family.

It carries out the reaction glycerol + ATP = sn-glycerol 3-phosphate + ADP + H(+). Its pathway is polyol metabolism; glycerol degradation via glycerol kinase pathway; sn-glycerol 3-phosphate from glycerol: step 1/1. Inhibited by fructose 1,6-bisphosphate (FBP). In terms of biological role, key enzyme in the regulation of glycerol uptake and metabolism. Catalyzes the phosphorylation of glycerol to yield sn-glycerol 3-phosphate. This is Glycerol kinase 2 from Streptomyces coelicolor (strain ATCC BAA-471 / A3(2) / M145).